Reading from the N-terminus, the 230-residue chain is UPF0702 transmembrane protein YcaP (230 aa).

3 helical membrane-spanning segments follow: residues 16–36 (FDFL…VFLF), 48–68 (MSLF…DVAF), and 75–95 (VPVL…MWLM).

Belongs to the UPF0702 family.

It localises to the cell membrane. The protein is UPF0702 transmembrane protein YcaP (ycaP) of Escherichia coli (strain K12).